We begin with the raw amino-acid sequence, 374 residues long: Glutamate 5-kinase (374 aa).

K16 contributes to the ATP binding site. 3 residues coordinate substrate: S56, D143, and N155. ATP-binding positions include 175–176 (TD) and 217–223 (SGGMLTK). A PUA domain is found at 282–360 (RGALILDDGA…SNIGAILGYK (79 aa)).

It belongs to the glutamate 5-kinase family.

It localises to the cytoplasm. It catalyses the reaction L-glutamate + ATP = L-glutamyl 5-phosphate + ADP. Its pathway is amino-acid biosynthesis; L-proline biosynthesis; L-glutamate 5-semialdehyde from L-glutamate: step 1/2. In terms of biological role, catalyzes the transfer of a phosphate group to glutamate to form L-glutamate 5-phosphate. This is Glutamate 5-kinase from Marinomonas sp. (strain MWYL1).